The chain runs to 521 residues: Protein nucleotidyltransferase YdiU (521 aa).

Residues Gly109, Gly111, Arg112, Lys131, Asp143, Gly144, Arg194, and Arg201 each contribute to the ATP site. Asp270 acts as the Proton acceptor in catalysis. Residues Asn271 and Asp280 each coordinate Mg(2+). Residue Asp280 participates in ATP binding.

It belongs to the SELO family. Mg(2+) is required as a cofactor. It depends on Mn(2+) as a cofactor.

The catalysed reaction is L-seryl-[protein] + ATP = 3-O-(5'-adenylyl)-L-seryl-[protein] + diphosphate. It carries out the reaction L-threonyl-[protein] + ATP = 3-O-(5'-adenylyl)-L-threonyl-[protein] + diphosphate. It catalyses the reaction L-tyrosyl-[protein] + ATP = O-(5'-adenylyl)-L-tyrosyl-[protein] + diphosphate. The enzyme catalyses L-histidyl-[protein] + UTP = N(tele)-(5'-uridylyl)-L-histidyl-[protein] + diphosphate. The catalysed reaction is L-seryl-[protein] + UTP = O-(5'-uridylyl)-L-seryl-[protein] + diphosphate. It carries out the reaction L-tyrosyl-[protein] + UTP = O-(5'-uridylyl)-L-tyrosyl-[protein] + diphosphate. Its function is as follows. Nucleotidyltransferase involved in the post-translational modification of proteins. It can catalyze the addition of adenosine monophosphate (AMP) or uridine monophosphate (UMP) to a protein, resulting in modifications known as AMPylation and UMPylation. This is Protein nucleotidyltransferase YdiU from Burkholderia mallei (strain ATCC 23344).